We begin with the raw amino-acid sequence, 234 residues long: Large ribosomal subunit protein uL1 (234 aa).

It belongs to the universal ribosomal protein uL1 family. Part of the 50S ribosomal subunit.

In terms of biological role, binds directly to 23S rRNA. The L1 stalk is quite mobile in the ribosome, and is involved in E site tRNA release. Its function is as follows. Protein L1 is also a translational repressor protein, it controls the translation of the L11 operon by binding to its mRNA. In Psychromonas ingrahamii (strain DSM 17664 / CCUG 51855 / 37), this protein is Large ribosomal subunit protein uL1.